Here is an 832-residue protein sequence, read N- to C-terminus: Mucosa-associated lymphoid tissue lymphoma translocation protein 1 homolog (832 aa).

Positions 1 to 39 (MSLWGQPLQASPPLAVRQPPTASSGPSTSPPAGATLNRL) are disordered. Residue Ser-2 is modified to N-acetylserine. Low complexity predominate over residues 19 to 39 (PPTASSGPSTSPPAGATLNRL). Positions 45–132 (RRLSESLDRA…EVLPLLNPPG (88 aa)) constitute a Death domain. Ig-like C2-type domains are found at residues 131–207 (PGLK…FEFS) and 218–314 (AEVT…KKAE). Residue Ser-141 is modified to Phosphoserine. Intrachain disulfides connect Cys-154-Cys-196 and Cys-257-Cys-299. The caspase-like stretch occupies residues 356–570 (IGNMSYWEHP…SLSEKRALTD (215 aa)). The short motif at 377 to 384 (LTNLLRQL) is the Nuclear export signal element. Active-site residues include His-423 and Cys-472.

Belongs to the peptidase C14B family. In terms of assembly, homooligomer; forms oligomers which bind to TRAF6. Forms a complex with CARD14 and MALT1; resulting in the formation of a CBM (CARD14-BCL10-MALT1) complex. Forms a complex with CARD11 and MALT1; resulting in the formation of a CBM (CARD11-BCL10-MALT1) complex. Forms a complex with CARD9 and MALT1; resulting in the formation of a CBM (CARD9-BCL10-MALT1) complex.

The protein localises to the cytoplasm. Its subcellular location is the perinuclear region. It localises to the nucleus. Its function is as follows. Protease that enhances BCL10-induced activation: acts via formation of CBM complexes that channel adaptive and innate immune signaling downstream of CARD domain-containing proteins (CARD9, CARD11 and CARD14) to activate NF-kappa-B and MAP kinase p38 pathways which stimulate expression of genes encoding pro-inflammatory cytokines and chemokines. Mediates BCL10 cleavage: MALT1-dependent BCL10 cleavage plays an important role in T-cell antigen receptor-induced integrin adhesion. Involved in the induction of T helper 17 cells (Th17) differentiation. Cleaves RC3H1 and ZC3H12A in response to T-cell receptor (TCR) stimulation which releases their cooperatively repressed targets to promote Th17 cell differentiation. Also mediates cleavage of N4BP1 in T-cells following TCR-mediated activation, leading to N4BP1 inactivation. May also have ubiquitin ligase activity: binds to TRAF6, inducing TRAF6 oligomerization and activation of its ligase activity. The polypeptide is Mucosa-associated lymphoid tissue lymphoma translocation protein 1 homolog (Mus musculus (Mouse)).